The chain runs to 396 residues: Dual specificity mitogen-activated protein kinase kinase dSOR1 (396 aa).

Positions 25 to 44 are disordered; that stretch reads APTPPFKTPSGTDTHSLLGK. One can recognise a Protein kinase domain in the interval 87-364; sequence LEKLGELGSG…LKTLLSHPWI (278 aa). ATP-binding positions include 93 to 101 and K116; that span reads LGSGNGGVV. The Proton acceptor role is filled by D209. Phosphoserine; by RAF occurs at positions 237 and 241.

The protein belongs to the protein kinase superfamily. STE Ser/Thr protein kinase family. MAP kinase kinase subfamily. As to quaternary structure, interacts with Raf and ksr; Dsor1 binding to ksr probably promotes ksr and Raf dimerization and ksr-mediated Raf transactivation. In terms of processing, phosphorylation on Ser/Thr by MAP kinase kinase kinases regulates positively the kinase activity.

The catalysed reaction is L-seryl-[protein] + ATP = O-phospho-L-seryl-[protein] + ADP + H(+). It carries out the reaction L-threonyl-[protein] + ATP = O-phospho-L-threonyl-[protein] + ADP + H(+). The enzyme catalyses L-tyrosyl-[protein] + ATP = O-phospho-L-tyrosyl-[protein] + ADP + H(+). Functionally, required downstream of Raf in the sevenless (sev), torso (tor), and Drosophila EGF receptor homolog (DER) signal transduction pathways. Involved in both positive regulation (at the posterior terminus) and negative regulation (at the anterior domain) of tll, as in other terminal class gene products, maybe via the ERK-A kinase. The polypeptide is Dual specificity mitogen-activated protein kinase kinase dSOR1 (Dsor1) (Drosophila melanogaster (Fruit fly)).